The primary structure comprises 134 residues: Putative nickel-responsive regulator (134 aa).

Residues H78, H89, H91, and C97 each contribute to the Ni(2+) site.

Belongs to the transcriptional regulatory CopG/NikR family. It depends on Ni(2+) as a cofactor.

Functionally, transcriptional regulator. This Chlorobaculum tepidum (strain ATCC 49652 / DSM 12025 / NBRC 103806 / TLS) (Chlorobium tepidum) protein is Putative nickel-responsive regulator.